We begin with the raw amino-acid sequence, 349 residues long: S-adenosylmethionine:tRNA ribosyltransferase-isomerase (349 aa).

This sequence belongs to the QueA family. Monomer.

The protein resides in the cytoplasm. It catalyses the reaction 7-aminomethyl-7-carbaguanosine(34) in tRNA + S-adenosyl-L-methionine = epoxyqueuosine(34) in tRNA + adenine + L-methionine + 2 H(+). It participates in tRNA modification; tRNA-queuosine biosynthesis. In terms of biological role, transfers and isomerizes the ribose moiety from AdoMet to the 7-aminomethyl group of 7-deazaguanine (preQ1-tRNA) to give epoxyqueuosine (oQ-tRNA). This is S-adenosylmethionine:tRNA ribosyltransferase-isomerase from Pseudomonas putida (strain W619).